We begin with the raw amino-acid sequence, 77 residues long: RNA-binding protein Hfq (77 aa).

The Sm domain maps to 10-70; it reads DAFLNHVRKT…ISTVMPAQPI (61 aa).

Belongs to the Hfq family. In terms of assembly, homohexamer.

Its function is as follows. RNA chaperone that binds small regulatory RNA (sRNAs) and mRNAs to facilitate mRNA translational regulation in response to envelope stress, environmental stress and changes in metabolite concentrations. Also binds with high specificity to tRNAs. The polypeptide is RNA-binding protein Hfq (Jannaschia sp. (strain CCS1)).